A 425-amino-acid polypeptide reads, in one-letter code: Serine--tRNA ligase (425 aa).

233 to 235 provides a ligand contact to L-serine; that stretch reads TAE. 264–266 contributes to the ATP binding site; that stretch reads RRE. Glu-287 serves as a coordination point for L-serine. 351–354 is a binding site for ATP; it reads EISS. Ser-385 serves as a coordination point for L-serine.

Belongs to the class-II aminoacyl-tRNA synthetase family. Type-1 seryl-tRNA synthetase subfamily. Homodimer. The tRNA molecule binds across the dimer.

The protein localises to the cytoplasm. The enzyme catalyses tRNA(Ser) + L-serine + ATP = L-seryl-tRNA(Ser) + AMP + diphosphate + H(+). It catalyses the reaction tRNA(Sec) + L-serine + ATP = L-seryl-tRNA(Sec) + AMP + diphosphate + H(+). The protein operates within aminoacyl-tRNA biosynthesis; selenocysteinyl-tRNA(Sec) biosynthesis; L-seryl-tRNA(Sec) from L-serine and tRNA(Sec): step 1/1. Catalyzes the attachment of serine to tRNA(Ser). Is also able to aminoacylate tRNA(Sec) with serine, to form the misacylated tRNA L-seryl-tRNA(Sec), which will be further converted into selenocysteinyl-tRNA(Sec). This Synechococcus sp. (strain WH7803) protein is Serine--tRNA ligase.